The primary structure comprises 276 residues: Secreted LysM effector LysM10 (276 aa).

Residues 1-22 (MLLSLVKFGILSVFLLAQEAVA) form the signal peptide. Asn27, Asn104, and Asn140 each carry an N-linked (GlcNAc...) asparagine glycan. In terms of domain architecture, LysM spans 219–264 (KTYIAKEDDTCKSISEAQSISTDRLVEVNHLDYSCSSLTSGTALCI). Asn267 carries N-linked (GlcNAc...) asparagine glycosylation.

The protein belongs to the secreted LysM effector family.

It is found in the secreted. Secreted LysM effector that might have a role in sequestration of chitin oligosaccharides (breakdown products of fungal cell walls that are released during invasion and act as triggers of host immunity) to dampen host defense. This chain is Secreted LysM effector LysM10, found in Penicillium expansum (Blue mold rot fungus).